The primary structure comprises 156 residues: ATP synthase subunit b (156 aa).

Residues 7 to 29 traverse the membrane as a helical segment; the sequence is LLGQAISFALFVWFCMKYVWPPL.

It belongs to the ATPase B chain family. In terms of assembly, F-type ATPases have 2 components, F(1) - the catalytic core - and F(0) - the membrane proton channel. F(1) has five subunits: alpha(3), beta(3), gamma(1), delta(1), epsilon(1). F(0) has three main subunits: a(1), b(2) and c(10-14). The alpha and beta chains form an alternating ring which encloses part of the gamma chain. F(1) is attached to F(0) by a central stalk formed by the gamma and epsilon chains, while a peripheral stalk is formed by the delta and b chains.

It localises to the cell inner membrane. Its function is as follows. F(1)F(0) ATP synthase produces ATP from ADP in the presence of a proton or sodium gradient. F-type ATPases consist of two structural domains, F(1) containing the extramembraneous catalytic core and F(0) containing the membrane proton channel, linked together by a central stalk and a peripheral stalk. During catalysis, ATP synthesis in the catalytic domain of F(1) is coupled via a rotary mechanism of the central stalk subunits to proton translocation. Component of the F(0) channel, it forms part of the peripheral stalk, linking F(1) to F(0). This Vibrio parahaemolyticus serotype O3:K6 (strain RIMD 2210633) protein is ATP synthase subunit b.